Here is a 382-residue protein sequence, read N- to C-terminus: Guanine nucleotide-binding protein G(s) subunit alpha (382 aa).

Residues 1–14 (MGCFGSPTSKQSDV) are compositionally biased toward polar residues. Positions 1–31 (MGCFGSPTSKQSDVNSEDSKSQKRRSDAISR) are disordered. Gly-2 carries N-palmitoyl glycine lipidation. Cys-3 is lipidated: S-palmitoyl cysteine. Residues 17–31 (EDSKSQKRRSDAISR) are compositionally biased toward basic and acidic residues. Residues 42 to 382 (ATHRLLLLGA…RMHLRQYELL (341 aa)) form the G-alpha domain. The tract at residues 45 to 58 (RLLLLGAGESGKST) is G1 motif. GTP-binding positions include 50–57 (GAGESGKS), 51–58 (AGESGKST), 186–192 (LRCRVLT), 211–215 (DVGGQ), 212–216 (VGGQR), 280–283 (NKQD), 281–284 (KQDL), and Ala-354. Positions 57 and 192 each coordinate Mg(2+). Residues 184–192 (DILRCRVLT) form a G2 motif region. The tract at residues 207–216 (FHMFDVGGQR) is G3 motif. The tract at residues 276–283 (ILFLNKQD) is G4 motif. The tract at residues 352-357 (TCAVDT) is G5 motif.

The protein belongs to the G-alpha family. G(s) subfamily. G proteins are composed of 3 units; alpha, beta and gamma. The alpha chain contains the guanine nucleotide binding site.

Guanine nucleotide-binding proteins (G proteins) are involved as modulators or transducers in various transmembrane signaling systems. The G(s) protein is involved in hormonal regulation of adenylate cyclase: it activates the cyclase. In Drosophila pseudoobscura pseudoobscura (Fruit fly), this protein is Guanine nucleotide-binding protein G(s) subunit alpha (G-salpha60A).